We begin with the raw amino-acid sequence, 286 residues long: Polyamine aminopropyltransferase (286 aa).

The PABS domain occupies 5-238 (TMWHETLHDQ…GIMTFAWATD (234 aa)). Glutamine 33 provides a ligand contact to S-methyl-5'-thioadenosine. Spermidine-binding residues include histidine 64 and aspartate 88. S-methyl-5'-thioadenosine-binding positions include glutamate 108 and 140–141 (DG). Aspartate 158 (proton acceptor) is an active-site residue. 158-161 (DCTD) lines the spermidine pocket. Proline 165 is a binding site for S-methyl-5'-thioadenosine.

The protein belongs to the spermidine/spermine synthase family. As to quaternary structure, homodimer or homotetramer.

It localises to the cytoplasm. It catalyses the reaction S-adenosyl 3-(methylsulfanyl)propylamine + putrescine = S-methyl-5'-thioadenosine + spermidine + H(+). Its pathway is amine and polyamine biosynthesis; spermidine biosynthesis; spermidine from putrescine: step 1/1. Its function is as follows. Catalyzes the irreversible transfer of a propylamine group from the amino donor S-adenosylmethioninamine (decarboxy-AdoMet) to putrescine (1,4-diaminobutane) to yield spermidine. The protein is Polyamine aminopropyltransferase of Salmonella typhi.